Here is a 269-residue protein sequence, read N- to C-terminus: Undecaprenyl-diphosphatase (269 aa).

8 helical membrane passes run 4–24 (IELWTAVLAGVVQGITEWLPI), 50–70 (LWLHAGTLLAVLLRFGVPYWL), 86–106 (LFAIVATVCTAVVGLPVYKVL), 113–133 (ATGDAVQMAIGGALIVTGLLL), 146–166 (VNVVDAVIVGLGQGFSVIPGI), 186–206 (AVWLSFYLAGPAMLGATALEL), 220–240 (WMVTAIGVSFVVSLICMEVLL), and 246–266 (LDFSKVCLLLGGIALLVPLAA).

Belongs to the UppP family.

It is found in the cell membrane. The catalysed reaction is di-trans,octa-cis-undecaprenyl diphosphate + H2O = di-trans,octa-cis-undecaprenyl phosphate + phosphate + H(+). Catalyzes the dephosphorylation of undecaprenyl diphosphate (UPP). The sequence is that of Undecaprenyl-diphosphatase from Methanopyrus kandleri (strain AV19 / DSM 6324 / JCM 9639 / NBRC 100938).